Consider the following 158-residue polypeptide: MPELTHFDAAGQAHMVDVGGKQETRRIAIARGSIRMLPETFALIRDGNAKKGDVIGIARIAAIQGSKRTADLIPLCHPLALTRVKVDFELDDTLPGVHCTVQVETLGRTGVEMEALTAVQVGLLTVYDMCKAVDRGMTITDVRVLEKHGGKSGDWVAG.

Residues 75–77 (LCH) and 113–114 (ME) each bind substrate. Asp-128 is a catalytic residue.

Belongs to the MoaC family. In terms of assembly, homohexamer; trimer of dimers.

The enzyme catalyses (8S)-3',8-cyclo-7,8-dihydroguanosine 5'-triphosphate = cyclic pyranopterin phosphate + diphosphate. Its pathway is cofactor biosynthesis; molybdopterin biosynthesis. Functionally, catalyzes the conversion of (8S)-3',8-cyclo-7,8-dihydroguanosine 5'-triphosphate to cyclic pyranopterin monophosphate (cPMP). The chain is Cyclic pyranopterin monophosphate synthase from Paraburkholderia phytofirmans (strain DSM 17436 / LMG 22146 / PsJN) (Burkholderia phytofirmans).